A 327-amino-acid polypeptide reads, in one-letter code: Undecaprenyl-phosphate 4-deoxy-4-formamido-L-arabinose transferase (327 aa).

The Cytoplasmic segment spans residues 1 to 235; it reads MFDAAPIKKV…TCLTTTPLRL (235 aa). A helical transmembrane segment spans residues 236–256; that stretch reads LSLLGSVIAIGGFSLSVLLIV. The Periplasmic portion of the chain corresponds to 257 to 269; the sequence is LRLALGPQWAAEG. The helical transmembrane segment at 270 to 290 threads the bilayer; sequence VFMLFAVLFTFIGAQFIGMGL. At 291 to 327 the chain is on the cytoplasmic side; that stretch reads LGEYIGRIYNDVRARPRYFVQQVIYPESTPFTEESHQ.

The protein belongs to the glycosyltransferase 2 family.

The protein resides in the cell inner membrane. The catalysed reaction is UDP-4-deoxy-4-formamido-beta-L-arabinose + di-trans,octa-cis-undecaprenyl phosphate = 4-deoxy-4-formamido-alpha-L-arabinopyranosyl di-trans,octa-cis-undecaprenyl phosphate + UDP. It participates in glycolipid biosynthesis; 4-amino-4-deoxy-alpha-L-arabinose undecaprenyl phosphate biosynthesis; 4-amino-4-deoxy-alpha-L-arabinose undecaprenyl phosphate from UDP-4-deoxy-4-formamido-beta-L-arabinose and undecaprenyl phosphate: step 1/2. Its pathway is bacterial outer membrane biogenesis; lipopolysaccharide biosynthesis. Catalyzes the transfer of 4-deoxy-4-formamido-L-arabinose from UDP to undecaprenyl phosphate. The modified arabinose is attached to lipid A and is required for resistance to polymyxin and cationic antimicrobial peptides. This is Undecaprenyl-phosphate 4-deoxy-4-formamido-L-arabinose transferase from Salmonella agona (strain SL483).